The sequence spans 460 residues: MIQLKVYAGLSTLATLVVIYHAFSSRGQFYPATVYLSTSKINLVVLLNMGLVLMLSLWNLVKIVFLGSLREAEVERLNEQAWRELMEILFAITIFRQDFSVGFISLVVTLLLIKGLHWMAQKRVEYIETTPSVTLLSHVRIVSFMVFLLILDCLLTYSSIQQLIQSRKASMSVFFTFEYMILATTTVSIIVKYAFYVTDMLKEGQWEGKPVYTFYLELVRDLLHLSMYLCFFLMIFMNYGLPLHLIRELYETFRNFKIRVTDYLRYRKITSNMNDRFPDATPEELSSNDATCIICREEMTSAKKLVCGHLFHVHCLRSWLERQNTCPTCRALVVPAENATSTASGNRGPHQESLQQGTGTSSSDGQGSSVSAAASENMSRHEARFQAAASAASIYGRSIVYPSSANTLVWSQGNSLLPQTEVEAQRRFLESQIEVLTNQLRLLEKPTTVDTKGKSVADTA.

The Cytoplasmic segment spans residues 1–3; that stretch reads MIQ. A helical membrane pass occupies residues 4 to 24; the sequence is LKVYAGLSTLATLVVIYHAFS. Topologically, residues 25–40 are lumenal; that stretch reads SRGQFYPATVYLSTSK. A helical membrane pass occupies residues 41–61; that stretch reads INLVVLLNMGLVLMLSLWNLV. At 62–98 the chain is on the cytoplasmic side; it reads KIVFLGSLREAEVERLNEQAWRELMEILFAITIFRQD. Residues 99–119 form a helical membrane-spanning segment; it reads FSVGFISLVVTLLLIKGLHWM. At 120–140 the chain is on the lumenal side; sequence AQKRVEYIETTPSVTLLSHVR. A helical membrane pass occupies residues 141–161; it reads IVSFMVFLLILDCLLTYSSIQ. At 162–170 the chain is on the cytoplasmic side; that stretch reads QLIQSRKAS. Residues 171 to 191 traverse the membrane as a helical segment; that stretch reads MSVFFTFEYMILATTTVSIIV. Over 192 to 225 the chain is Lumenal; that stretch reads KYAFYVTDMLKEGQWEGKPVYTFYLELVRDLLHL. Residues 226–246 traverse the membrane as a helical segment; sequence SMYLCFFLMIFMNYGLPLHLI. Residues 247-460 lie on the Cytoplasmic side of the membrane; that stretch reads RELYETFRNF…TKGKSVADTA (214 aa). The RING-type; atypical zinc-finger motif lies at 292–330; it reads CIICREEMTSAKKLVCGHLFHVHCLRSWLERQNTCPTCR. Positions 339-378 are disordered; sequence ATSTASGNRGPHQESLQQGTGTSSSDGQGSSVSAAASENM. Residues 353–375 show a composition bias toward low complexity; that stretch reads SLQQGTGTSSSDGQGSSVSAAAS.

This sequence belongs to the HRD1 family.

Its subcellular location is the endoplasmic reticulum membrane. It carries out the reaction S-ubiquitinyl-[E2 ubiquitin-conjugating enzyme]-L-cysteine + [acceptor protein]-L-lysine = [E2 ubiquitin-conjugating enzyme]-L-cysteine + N(6)-ubiquitinyl-[acceptor protein]-L-lysine.. It functions in the pathway protein modification; protein ubiquitination. Functionally, probable component of the HRD1 ubiquitin ligase complex that mediates the rapid degradation of misfolded endoplasmic reticulum (ER) proteins, a process called ER-associated degradation (ERAD). Targets the misfolded LRR receptor kinase BRI1. Functions redundantly with HRD3A. The sequence is that of ERAD-associated E3 ubiquitin-protein ligase HRD1B from Arabidopsis thaliana (Mouse-ear cress).